The sequence spans 169 residues: Small ribosomal subunit protein uS5c (169 aa).

In terms of domain architecture, S5 DRBM spans 17–80 (WQERVVQIRR…ADGKKHVVEV (64 aa)).

Belongs to the universal ribosomal protein uS5 family. As to quaternary structure, part of the 30S ribosomal subunit. Contacts protein S4.

It localises to the plastid. The protein resides in the cyanelle. In terms of biological role, with S4 and S12 plays an important role in translational accuracy. This chain is Small ribosomal subunit protein uS5c (rps5), found in Cyanophora paradoxa.